The primary structure comprises 297 residues: Putative 6-phosphogluconate dehydrogenase YqeC (297 aa).

NAD(+) is bound by residues 7–12 (GLGKMG) and Asn-94. Residues Asn-94 and 120-122 (SGG) each bind substrate. Lys-170 (proton acceptor) is an active-site residue. 173–174 (HN) contributes to the substrate binding site. The Proton donor role is filled by Glu-177. Substrate contacts are provided by Tyr-178 and Arg-268.

It belongs to the 6-phosphogluconate dehydrogenase family.

Functionally, may act as NAD-dependent 6-P-gluconate dehydrogenase. The polypeptide is Putative 6-phosphogluconate dehydrogenase YqeC (yqeC) (Bacillus subtilis (strain 168)).